A 374-amino-acid chain; its full sequence is Pre-B-cell leukemia transcription factor 4 (374 aa).

Residues 14-209 (PRRLDTSDVL…VMTLRSRLLD (196 aa)) form the PBC domain. Positions 21 to 100 (DVLQQIMAIT…EGVCRPEKRG (80 aa)) are PBC-A. The PBC-B stretch occupies residues 103–209 (GAVARAGTAT…VMTLRSRLLD (107 aa)). A DNA-binding region (homeobox; TALE-type) is located at residues 210–272 (ARRKRRNFSK…NKRIRYKKNM (63 aa)). Residues 333 to 374 (QPPPGGGCLQSQAQGSWQGATPQPATASPAGDPGSINSSTSN) form a disordered region. Residues 341–358 (LQSQAQGSWQGATPQPAT) show a composition bias toward polar residues.

It belongs to the TALE/PBX homeobox family.

The protein resides in the nucleus. This chain is Pre-B-cell leukemia transcription factor 4 (PBX4), found in Homo sapiens (Human).